Consider the following 658-residue polypeptide: Exoribonuclease 2 (658 aa).

The RNB domain occupies 189–530 (REDLTSLYFT…VNHRLIKQVL (342 aa)). An S1 motif domain is found at 576–658 (AVEFDCEIAD…ETRSIVGNII (83 aa)).

The protein belongs to the RNR ribonuclease family. RNase II subfamily.

It is found in the cytoplasm. It carries out the reaction Exonucleolytic cleavage in the 3'- to 5'-direction to yield nucleoside 5'-phosphates.. In terms of biological role, involved in mRNA degradation. Hydrolyzes single-stranded polyribonucleotides processively in the 3' to 5' direction. The chain is Exoribonuclease 2 from Actinobacillus pleuropneumoniae serotype 3 (strain JL03).